The chain runs to 351 residues: MDLSVFQFDLPEDLIALRPAQPQDAARLLVVHGDGRLIDATVRDLPKYLNTGDVLVFNDTRVLPAALKGVRPARDGASRDVEVDVNLVERQGDCLWLALARPGRRLKDGDEIFFAEGFSARIASRREGGEILLDFNCEGEAMIAALDAHGAMPLPPYIARRRPADAEDRETYQTRFAGEDAASVAAPTAGLHFTPRLLAEVEAAGLKRETVRLHVGLGTFKPLEDRHLSENRLHEEWRRITPEVADRLNAARAAGARLVPVGTTAMRTLESCAGEDGQIHAATGPTDIFLKPGDPVRATDALMTNFHLPGSSLFMLVSALMGTSLMRAAYAHAIEEKYRFYSYGDACLLLP.

This sequence belongs to the QueA family. Monomer.

It localises to the cytoplasm. It carries out the reaction 7-aminomethyl-7-carbaguanosine(34) in tRNA + S-adenosyl-L-methionine = epoxyqueuosine(34) in tRNA + adenine + L-methionine + 2 H(+). The protein operates within tRNA modification; tRNA-queuosine biosynthesis. In terms of biological role, transfers and isomerizes the ribose moiety from AdoMet to the 7-aminomethyl group of 7-deazaguanine (preQ1-tRNA) to give epoxyqueuosine (oQ-tRNA). This Hyphomonas neptunium (strain ATCC 15444) protein is S-adenosylmethionine:tRNA ribosyltransferase-isomerase.